A 472-amino-acid chain; its full sequence is Sporozoite surface protein P36p (472 aa).

Positions 1-23 are cleaved as a signal peptide; sequence MMKRRRIFMYYCFCFLLKYVAFS. Asparagine 24, asparagine 29, asparagine 93, asparagine 112, and asparagine 185 each carry an N-linked (GlcNAc...) asparagine glycan. 2 consecutive 6-Cys domains span residues 24-157 and 160-299; these read NVTN…FKKM and KIKG…TSKN. Intrachain disulfides connect cysteine 64-cysteine 138, cysteine 81-cysteine 136, cysteine 164-cysteine 188, cysteine 202-cysteine 281, and cysteine 222-cysteine 279. N-linked (GlcNAc...) asparagine glycosylation is found at asparagine 295, asparagine 306, asparagine 383, asparagine 396, asparagine 400, and asparagine 416. The interval 359–385 is disordered; that stretch reads KMDPSDEDESNENAHNGNRANKDANYS. Serine 449 carries GPI-anchor amidated serine lipidation. The propeptide at 450-472 is removed in mature form; it reads SSYYEVFNYFSIAFILIIHMLLW.

It localises to the cell surface. The protein localises to the cell membrane. Involved in sporozoite infection of hepatocytes and replication therein. This chain is Sporozoite surface protein P36p (P52), found in Plasmodium berghei (strain Anka).